The chain runs to 206 residues: Small ribosomal subunit protein uS4 (206 aa).

Residues 96 to 156 (SRLDNVVYRM…NKSKNQSRIK (61 aa)) form the S4 RNA-binding domain.

Belongs to the universal ribosomal protein uS4 family. Part of the 30S ribosomal subunit. Contacts protein S5. The interaction surface between S4 and S5 is involved in control of translational fidelity.

One of the primary rRNA binding proteins, it binds directly to 16S rRNA where it nucleates assembly of the body of the 30S subunit. Functionally, with S5 and S12 plays an important role in translational accuracy. In Buchnera aphidicola subsp. Acyrthosiphon pisum (strain 5A), this protein is Small ribosomal subunit protein uS4.